A 469-amino-acid chain; its full sequence is NADH-quinone oxidoreductase subunit N (469 aa).

Transmembrane regions (helical) follow at residues 2 to 22 (IALL…FLCV), 28 to 48 (RYSI…FFIV), 70 to 90 (FSFC…ISSF), 101 to 121 (EMFA…LSVE), 122 to 142 (LILT…MIAM), 157 to 177 (FLLS…VFGV), 194 to 214 (FLSI…IAIF), 233 to 253 (GFLA…LCFL), 261 to 281 (ILQG…NLLS), 290 to 310 (ILIA…SSVG), 315 to 335 (IYPA…LFAI), 361 to 381 (AFAF…VGFL), 398 to 418 (LAIF…KIII), and 447 to 467 (ILFI…LNLF).

It belongs to the complex I subunit 2 family. As to quaternary structure, NDH-1 is composed of 14 different subunits. Subunits NuoA, H, J, K, L, M, N constitute the membrane sector of the complex.

Its subcellular location is the cell inner membrane. The enzyme catalyses a quinone + NADH + 5 H(+)(in) = a quinol + NAD(+) + 4 H(+)(out). Functionally, NDH-1 shuttles electrons from NADH, via FMN and iron-sulfur (Fe-S) centers, to quinones in the respiratory chain. The immediate electron acceptor for the enzyme in this species is believed to be ubiquinone. Couples the redox reaction to proton translocation (for every two electrons transferred, four hydrogen ions are translocated across the cytoplasmic membrane), and thus conserves the redox energy in a proton gradient. The polypeptide is NADH-quinone oxidoreductase subunit N (Campylobacter fetus subsp. fetus (strain 82-40)).